A 288-amino-acid polypeptide reads, in one-letter code: Probable ketoamine kinase PM0587 (288 aa).

ATP is bound at residue 92-94 (EAL).

It belongs to the fructosamine kinase family.

Ketoamine kinase that phosphorylates ketoamines on the third carbon of the sugar moiety to generate ketoamine 3-phosphate. This Pasteurella multocida (strain Pm70) protein is Probable ketoamine kinase PM0587.